A 608-amino-acid chain; its full sequence is Threonine--tRNA ligase (608 aa).

Residues 1 to 144 (MRILLIHSDY…SRTITAEEEE (144 aa)) form an editing domain region. Residues 195-489 (PHVKLMREKE…ELDEKAPMLP (295 aa)) are catalytic. Residues Cys-286, His-338, and His-459 each contribute to the Zn(2+) site.

It belongs to the class-II aminoacyl-tRNA synthetase family. As to quaternary structure, homodimer. It depends on Zn(2+) as a cofactor.

It localises to the cytoplasm. It carries out the reaction tRNA(Thr) + L-threonine + ATP = L-threonyl-tRNA(Thr) + AMP + diphosphate + H(+). Its function is as follows. Catalyzes the attachment of threonine to tRNA(Thr) in a two-step reaction: L-threonine is first activated by ATP to form Thr-AMP and then transferred to the acceptor end of tRNA(Thr). Also edits incorrectly charged L-seryl-tRNA(Thr). The chain is Threonine--tRNA ligase from Methanobrevibacter smithii (strain ATCC 35061 / DSM 861 / OCM 144 / PS).